Reading from the N-terminus, the 256-residue chain is MSGNREQVFPTRMTLGLMKTKLKGANQGYSLLKRKSEALTKRFRDITKRIDDAKQKMGRVMQTAAFSLAEVSYATGENIGYQVQESVSTARFKVRARQENVSGVYLSQFESYIDPEINDFRLTGLGRGGQQVQRAKEIYSRAVETLVELASLQTAFIILDEVIKVTNRRVNAIEHVIIPRTENTIAYINSELDELDREEFYRLKKVQEKKQNETAKLDAEMKLKRDRAEQDASEVAADEEPQGETLVADQEDDVIF.

Basic and acidic residues predominate over residues Gln-211 to Gln-230. Residues Gln-211–Phe-256 form a disordered region.

Belongs to the V-ATPase D subunit family. V-ATPase is a heteromultimeric enzyme composed of a peripheral catalytic V1 complex (components A to H) attached to an integral membrane V0 proton pore complex (components: a, c, c', c'', d, e, f and VOA1). Interacts with RAV1 and RAV2 components of the RAVE complex, which are essential for the stability and assembly of V-ATPase.

The protein localises to the vacuole membrane. In terms of biological role, subunit of the V1 complex of vacuolar(H+)-ATPase (V-ATPase), a multisubunit enzyme composed of a peripheral complex (V1) that hydrolyzes ATP and a membrane integral complex (V0) that translocates protons. V-ATPase is responsible for acidifying and maintaining the pH of intracellular compartments. The sequence is that of V-type proton ATPase subunit D from Saccharomyces cerevisiae (strain ATCC 204508 / S288c) (Baker's yeast).